A 241-amino-acid polypeptide reads, in one-letter code: MKFNLALALSLTVATAEAATELCKQWDSIIEGNFIVYNNLWGQGNADDGGHQCTTVKSISGDTVVWSTEWAWSGGPGQVKSYANAALQFTPTTLSSVSSIDSTWKWRDSYTGSDIVANVAYDMFLSSSATGSEEYEIMVWLAALGGAGPISSTGSPIATPTINGVQWDLYLGPNGAMQVYSFVAPSSTENFAGDMKGFIDYLTSEQGLSKDLYLLDVQAGTEPFSGSDAVLTVSEYSVNLA.

A signal peptide spans 1-18 (MKFNLALALSLTVATAEA).

It belongs to the glycosyl hydrolase 12 (cellulase H) family.

The protein resides in the secreted. The enzyme catalyses xyloglucan + H2O = xyloglucan oligosaccharides.. Its function is as follows. Catalyzes endohydrolysis of 1,4-beta-D-glucosidic linkages in xyloglucan with retention of the beta-configuration of the glycosyl residues. Specific for xyloglucan and does not hydrolyze other cell wall components. This Aspergillus clavatus (strain ATCC 1007 / CBS 513.65 / DSM 816 / NCTC 3887 / NRRL 1 / QM 1276 / 107) protein is Probable xyloglucan-specific endo-beta-1,4-glucanase A (xgeA).